The primary structure comprises 395 residues: 1-deoxy-D-xylulose 5-phosphate reductoisomerase (395 aa).

NADPH contacts are provided by threonine 10, glycine 11, serine 12, isoleucine 13, asparagine 38, and asparagine 122. Lysine 123 lines the 1-deoxy-D-xylulose 5-phosphate pocket. Residue glutamate 124 coordinates NADPH. Mn(2+) is bound at residue aspartate 148. 1-deoxy-D-xylulose 5-phosphate-binding residues include serine 149, glutamate 150, serine 178, and histidine 200. Glutamate 150 provides a ligand contact to Mn(2+). Glycine 206 provides a ligand contact to NADPH. 1-deoxy-D-xylulose 5-phosphate is bound by residues serine 213, asparagine 218, lysine 219, and glutamate 222. Glutamate 222 provides a ligand contact to Mn(2+).

It belongs to the DXR family. Mg(2+) is required as a cofactor. The cofactor is Mn(2+).

It carries out the reaction 2-C-methyl-D-erythritol 4-phosphate + NADP(+) = 1-deoxy-D-xylulose 5-phosphate + NADPH + H(+). Its pathway is isoprenoid biosynthesis; isopentenyl diphosphate biosynthesis via DXP pathway; isopentenyl diphosphate from 1-deoxy-D-xylulose 5-phosphate: step 1/6. In terms of biological role, catalyzes the NADPH-dependent rearrangement and reduction of 1-deoxy-D-xylulose-5-phosphate (DXP) to 2-C-methyl-D-erythritol 4-phosphate (MEP). The chain is 1-deoxy-D-xylulose 5-phosphate reductoisomerase from Elusimicrobium minutum (strain Pei191).